Reading from the N-terminus, the 37-residue chain is Large ribosomal subunit protein bL36 (37 aa).

Belongs to the bacterial ribosomal protein bL36 family.

This is Large ribosomal subunit protein bL36 (rpmJ) from Mycoplasmoides gallisepticum (strain R(low / passage 15 / clone 2)) (Mycoplasma gallisepticum).